We begin with the raw amino-acid sequence, 606 residues long: Retrovirus-related Pol polyprotein from type-1 retrotransposable element R2 (606 aa).

The Reverse transcriptase domain occupies 1-208 (GTLANIIMLE…NTFKYLGLTF (208 aa)). The segment at 331–606 (IFNIEGPARS…PPDPPRPVPP (276 aa)) is nucleic acid-binding endonuclease.

It carries out the reaction DNA(n) + a 2'-deoxyribonucleoside 5'-triphosphate = DNA(n+1) + diphosphate. The chain is Retrovirus-related Pol polyprotein from type-1 retrotransposable element R2 from Popillia japonica (Japanese beetle).